We begin with the raw amino-acid sequence, 388 residues long: Succinate--CoA ligase [ADP-forming] subunit beta (388 aa).

Positions 9–244 (KQLFAEYGLP…PSQDDAREAH (236 aa)) constitute an ATP-grasp domain. Residues lysine 46, 53-55 (GRG), glutamate 99, threonine 102, and glutamate 107 contribute to the ATP site. Mg(2+) is bound by residues asparagine 199 and aspartate 213. Residues asparagine 264 and 321 to 323 (GIV) contribute to the substrate site.

Belongs to the succinate/malate CoA ligase beta subunit family. Heterotetramer of two alpha and two beta subunits. It depends on Mg(2+) as a cofactor.

It carries out the reaction succinate + ATP + CoA = succinyl-CoA + ADP + phosphate. The enzyme catalyses GTP + succinate + CoA = succinyl-CoA + GDP + phosphate. The protein operates within carbohydrate metabolism; tricarboxylic acid cycle; succinate from succinyl-CoA (ligase route): step 1/1. Functionally, succinyl-CoA synthetase functions in the citric acid cycle (TCA), coupling the hydrolysis of succinyl-CoA to the synthesis of either ATP or GTP and thus represents the only step of substrate-level phosphorylation in the TCA. The beta subunit provides nucleotide specificity of the enzyme and binds the substrate succinate, while the binding sites for coenzyme A and phosphate are found in the alpha subunit. In Pseudomonas entomophila (strain L48), this protein is Succinate--CoA ligase [ADP-forming] subunit beta.